Consider the following 281-residue polypeptide: Lipoyl synthase (281 aa).

Positions 37, 42, 48, 63, 67, 70, and 274 each coordinate [4Fe-4S] cluster. One can recognise a Radical SAM core domain in the interval 49 to 263 (WSRGTATFMI…RQQAVNKGFK (215 aa)).

This sequence belongs to the radical SAM superfamily. Lipoyl synthase family. [4Fe-4S] cluster serves as cofactor.

The protein resides in the cytoplasm. It carries out the reaction [[Fe-S] cluster scaffold protein carrying a second [4Fe-4S](2+) cluster] + N(6)-octanoyl-L-lysyl-[protein] + 2 oxidized [2Fe-2S]-[ferredoxin] + 2 S-adenosyl-L-methionine + 4 H(+) = [[Fe-S] cluster scaffold protein] + N(6)-[(R)-dihydrolipoyl]-L-lysyl-[protein] + 4 Fe(3+) + 2 hydrogen sulfide + 2 5'-deoxyadenosine + 2 L-methionine + 2 reduced [2Fe-2S]-[ferredoxin]. It functions in the pathway protein modification; protein lipoylation via endogenous pathway; protein N(6)-(lipoyl)lysine from octanoyl-[acyl-carrier-protein]: step 2/2. In terms of biological role, catalyzes the radical-mediated insertion of two sulfur atoms into the C-6 and C-8 positions of the octanoyl moiety bound to the lipoyl domains of lipoate-dependent enzymes, thereby converting the octanoylated domains into lipoylated derivatives. This chain is Lipoyl synthase, found in Parabacteroides distasonis (strain ATCC 8503 / DSM 20701 / CIP 104284 / JCM 5825 / NCTC 11152).